The sequence spans 322 residues: Lipoyl synthase (322 aa).

[4Fe-4S] cluster-binding residues include Cys-66, Cys-71, Cys-77, Cys-92, Cys-96, Cys-99, and Ser-306. The Radical SAM core domain maps to 78-295; sequence FSKGTATFMI…EKEAYELGFS (218 aa).

It belongs to the radical SAM superfamily. Lipoyl synthase family. It depends on [4Fe-4S] cluster as a cofactor.

Its subcellular location is the cytoplasm. It carries out the reaction [[Fe-S] cluster scaffold protein carrying a second [4Fe-4S](2+) cluster] + N(6)-octanoyl-L-lysyl-[protein] + 2 oxidized [2Fe-2S]-[ferredoxin] + 2 S-adenosyl-L-methionine + 4 H(+) = [[Fe-S] cluster scaffold protein] + N(6)-[(R)-dihydrolipoyl]-L-lysyl-[protein] + 4 Fe(3+) + 2 hydrogen sulfide + 2 5'-deoxyadenosine + 2 L-methionine + 2 reduced [2Fe-2S]-[ferredoxin]. The protein operates within protein modification; protein lipoylation via endogenous pathway; protein N(6)-(lipoyl)lysine from octanoyl-[acyl-carrier-protein]: step 2/2. In terms of biological role, catalyzes the radical-mediated insertion of two sulfur atoms into the C-6 and C-8 positions of the octanoyl moiety bound to the lipoyl domains of lipoate-dependent enzymes, thereby converting the octanoylated domains into lipoylated derivatives. The protein is Lipoyl synthase of Neisseria meningitidis serogroup C (strain 053442).